Consider the following 96-residue polypeptide: Cystatin (96 aa).

The Cystatin domain maps to 22-65 (DFIKAALNETGTHAGRKYKVLRSSQQVVAGMKYTFYIVFEDDES). Residue asparagine 29 is glycosylated (N-linked (GlcNAc...) asparagine).

Belongs to the cystatin family. Interacts with cathepsin L-like peptidase; the interaction results in inhibition of cathepsin L-like peptidase activity. In terms of tissue distribution, salivary gland. Midgut.

Functionally, cysteine proteinase inhibitor. Inhibits cathepsin L-like peptidase. Increases cell viability following apoptosis induction by staurosporine. Inhibits human cathepsin S (CTSS), human cathepsin L2 (CTSV), human cathepsin L (CTSL), human cathepsin B (CTSB) and papain. In terms of biological role, (Microbial infection) Modulates dengue virus type 2 replication in salivary glands. This Aedes aegypti (Yellowfever mosquito) protein is Cystatin.